A 232-amino-acid polypeptide reads, in one-letter code: Histone H1A (232 aa).

The segment covering 1-18 (MSDPAVEVTPAVPVASPA) has biased composition (low complexity). 2 disordered regions span residues 1–42 (MSDP…THLP) and 98–232 (LQTK…AKKA). The 75-residue stretch at 39–113 (THLPVSDMVV…GASGSFKLPA (75 aa)) folds into the H15 domain. Basic residues-rich tracts occupy residues 131-141 (KPKKAAAPKPK), 147-173 (KVKKTIAKKPKAATATKIKKPVAKTTK), 181-214 (AAKKAAPKPKAAPKPKAAKKETKPKKAAAPKAKK), and 222-232 (KAAKKPAAKKA).

This sequence belongs to the histone H1/H5 family.

Its subcellular location is the nucleus. The protein localises to the chromosome. Functionally, histones H1 are necessary for the condensation of nucleosome chains into higher-order structures. This Chironomus tentans (Midge) protein is Histone H1A.